The chain runs to 291 residues: 4-hydroxy-tetrahydrodipicolinate synthase (291 aa).

Thr-44 contacts pyruvate. Tyr-132 functions as the Proton donor/acceptor in the catalytic mechanism. The active-site Schiff-base intermediate with substrate is Lys-160. Val-202 contributes to the pyruvate binding site.

Belongs to the DapA family. As to quaternary structure, homotetramer; dimer of dimers.

It is found in the cytoplasm. The enzyme catalyses L-aspartate 4-semialdehyde + pyruvate = (2S,4S)-4-hydroxy-2,3,4,5-tetrahydrodipicolinate + H2O + H(+). It functions in the pathway amino-acid biosynthesis; L-lysine biosynthesis via DAP pathway; (S)-tetrahydrodipicolinate from L-aspartate: step 3/4. Catalyzes the condensation of (S)-aspartate-beta-semialdehyde [(S)-ASA] and pyruvate to 4-hydroxy-tetrahydrodipicolinate (HTPA). This Clostridium perfringens (strain 13 / Type A) protein is 4-hydroxy-tetrahydrodipicolinate synthase.